A 218-amino-acid polypeptide reads, in one-letter code: Small ribosomal subunit protein uS3c (218 aa).

The 72-residue stretch at 47-118 (IRRHMRSSSN…KLNIAIVKVA (72 aa)) folds into the KH type-2 domain.

The protein belongs to the universal ribosomal protein uS3 family. In terms of assembly, part of the 30S ribosomal subunit.

It localises to the plastid. Its subcellular location is the chloroplast. The polypeptide is Small ribosomal subunit protein uS3c (rps3) (Cycas taitungensis (Prince sago)).